The chain runs to 544 residues: Chaperonin GroEL 2 (544 aa).

ATP is bound by residues 30–33, 87–91, Gly-415, 480–482, and Asp-496; these read TLGP, DGTTT, and NAA.

It belongs to the chaperonin (HSP60) family. As to quaternary structure, forms a cylinder of 14 subunits composed of two heptameric rings stacked back-to-back. Interacts with the co-chaperonin GroES.

It localises to the cytoplasm. It carries out the reaction ATP + H2O + a folded polypeptide = ADP + phosphate + an unfolded polypeptide.. Functionally, together with its co-chaperonin GroES, plays an essential role in assisting protein folding. The GroEL-GroES system forms a nano-cage that allows encapsulation of the non-native substrate proteins and provides a physical environment optimized to promote and accelerate protein folding. The chain is Chaperonin GroEL 2 from Albidiferax ferrireducens (strain ATCC BAA-621 / DSM 15236 / T118) (Rhodoferax ferrireducens).